Reading from the N-terminus, the 286-residue chain is Probable aquaporin PIP-type pTOM75 (286 aa).

The segment at 1-35 (MAENKEEDVKLGANKFRETQPLGTAAQTDKDYKEP) is disordered. Over 1–55 (MAENKEEDVKLGANKFRETQPLGTAAQTDKDYKEPPPAPLFEPGELSSWSFYRAG) the chain is Cytoplasmic. Positions 7–18 (EDVKLGANKFRE) are enriched in basic and acidic residues. A helical membrane pass occupies residues 56 to 76 (IAEFMATFLFLYITILTVMGL). Topologically, residues 77–89 (KRSDSLCSSVGIQ) are extracellular. The helical transmembrane segment at 90 to 110 (GVAWAFGGMIFALVYCTAGIS) threads the bilayer. The Cytoplasmic segment spans residues 111-133 (GGHINPAVTFGLFLARKLSLTRA). The NPA 1 motif lies at 115–117 (NPA). Residues 134–154 (VFYMVMQCLGAICGAGVVKGF) traverse the membrane as a helical segment. Topologically, residues 155–175 (MVGPYQRLGGGANVVNPGYTK) are extracellular. The helical transmembrane segment at 176–196 (GDGLGAEIIGTFVLVYTVFSA) threads the bilayer. Residues 197–209 (TDAKRNARDSHVP) lie on the Cytoplasmic side of the membrane. Residues 210–230 (ILAPLPIGFAVFLVHLATIPI) traverse the membrane as a helical segment. Residues 231–257 (TGTGINPARSLGAAIIYNDEHAWNDHW) lie on the Extracellular side of the membrane. Positions 236-238 (NPA) match the NPA 2 motif. Residues 258–278 (IFWVGPMIGAALAAIYHQIII) traverse the membrane as a helical segment. Topologically, residues 279–286 (RAMPFHRS) are cytoplasmic.

It belongs to the MIP/aquaporin (TC 1.A.8) family. PIP (TC 1.A.8.11) subfamily. Roots, ripening fruit and senescing leaves.

It localises to the cell membrane. In terms of biological role, aquaporins facilitate the transport of water and small neutral solutes across cell membranes. The protein is Probable aquaporin PIP-type pTOM75 of Solanum lycopersicum (Tomato).